The sequence spans 95 residues: Acylphosphatase (95 aa).

Positions Thr-7–Pro-93 constitute an Acylphosphatase-like domain. Catalysis depends on residues Arg-22 and Asn-40.

It belongs to the acylphosphatase family.

It catalyses the reaction an acyl phosphate + H2O = a carboxylate + phosphate + H(+). The polypeptide is Acylphosphatase (acyP) (Cupriavidus metallidurans (strain ATCC 43123 / DSM 2839 / NBRC 102507 / CH34) (Ralstonia metallidurans)).